A 263-amino-acid chain; its full sequence is Probable 6-oxopurine nucleoside phosphorylase (263 aa).

Phosphate-binding positions include Thr9, 49-50 (RH), and 82-83 (TA). Met181 contributes to the substrate binding site. Thr182 serves as a coordination point for phosphate. Position 205 to 207 (205 to 207 (NYA)) interacts with substrate.

This sequence belongs to the PNP/MTAP phosphorylase family. MTAP subfamily. As to quaternary structure, homohexamer. Dimer of a homotrimer.

The catalysed reaction is a purine D-ribonucleoside + phosphate = a purine nucleobase + alpha-D-ribose 1-phosphate. It participates in purine metabolism; purine nucleoside salvage. In terms of biological role, purine nucleoside phosphorylase which is highly specific for 6-oxopurine nucleosides. Cleaves guanosine or inosine to respective bases and sugar-1-phosphate molecules. Involved in purine salvage. This Dictyoglomus turgidum (strain DSM 6724 / Z-1310) protein is Probable 6-oxopurine nucleoside phosphorylase.